We begin with the raw amino-acid sequence, 447 residues long: Argininosuccinate synthase (447 aa).

Residues 17–25 (AFSGGLDTS) and alanine 43 contribute to the ATP site. Tyrosine 99 provides a ligand contact to L-citrulline. Residues glycine 129 and threonine 131 each contribute to the ATP site. Residues threonine 131, asparagine 135, and aspartate 136 each contribute to the L-aspartate site. Asparagine 135 is a binding site for L-citrulline. Aspartate 136 provides a ligand contact to ATP. L-citrulline is bound by residues arginine 139 and serine 192. Aspartate 194 is a binding site for ATP. 3 residues coordinate L-citrulline: threonine 201, glutamate 203, and glutamate 280.

Belongs to the argininosuccinate synthase family. Type 2 subfamily. In terms of assembly, homotetramer.

It localises to the cytoplasm. The catalysed reaction is L-citrulline + L-aspartate + ATP = 2-(N(omega)-L-arginino)succinate + AMP + diphosphate + H(+). The protein operates within amino-acid biosynthesis; L-arginine biosynthesis; L-arginine from L-ornithine and carbamoyl phosphate: step 2/3. The polypeptide is Argininosuccinate synthase (Klebsiella pneumoniae subsp. pneumoniae (strain ATCC 700721 / MGH 78578)).